The following is a 307-amino-acid chain: D-alanine--D-alanine ligase (307 aa).

In terms of domain architecture, ATP-grasp spans 110–299; it reads KQLWKGAGLP…FDVLVGEILL (190 aa). 136–185 provides a ligand contact to ATP; that stretch reads PVIVKPAHEGSSIGMAKADNTEELGEALVAAEKFDQDVLVEAWVNGPEYT. Positions 253, 266, and 268 each coordinate Mg(2+).

This sequence belongs to the D-alanine--D-alanine ligase family. The cofactor is Mg(2+). Mn(2+) serves as cofactor.

Its subcellular location is the cytoplasm. The enzyme catalyses 2 D-alanine + ATP = D-alanyl-D-alanine + ADP + phosphate + H(+). The protein operates within cell wall biogenesis; peptidoglycan biosynthesis. Cell wall formation. This is D-alanine--D-alanine ligase from Alcanivorax borkumensis (strain ATCC 700651 / DSM 11573 / NCIMB 13689 / SK2).